The sequence spans 305 residues: UDP-N-acetylenolpyruvoylglucosamine reductase (305 aa).

The FAD-binding PCMH-type domain occupies 22–190 (KVGGAADFFA…LSARFRLQAG (169 aa)). Residue R169 is part of the active site. The Proton donor role is filled by S220. Residue E290 is part of the active site.

The protein belongs to the MurB family. FAD serves as cofactor.

It localises to the cytoplasm. The enzyme catalyses UDP-N-acetyl-alpha-D-muramate + NADP(+) = UDP-N-acetyl-3-O-(1-carboxyvinyl)-alpha-D-glucosamine + NADPH + H(+). Its pathway is cell wall biogenesis; peptidoglycan biosynthesis. Its function is as follows. Cell wall formation. This Synechococcus sp. (strain RCC307) protein is UDP-N-acetylenolpyruvoylglucosamine reductase.